Here is a 203-residue protein sequence, read N- to C-terminus: Guanylate kinase (203 aa).

Residues 5–184 (GMLIVLSGPS…AVQRIEKIIE (180 aa)) enclose the Guanylate kinase-like domain. 12 to 19 (GPSGVGKG) provides a ligand contact to ATP.

It belongs to the guanylate kinase family.

Its subcellular location is the cytoplasm. The enzyme catalyses GMP + ATP = GDP + ADP. Essential for recycling GMP and indirectly, cGMP. The protein is Guanylate kinase of Latilactobacillus sakei subsp. sakei (strain 23K) (Lactobacillus sakei subsp. sakei).